The primary structure comprises 264 residues: Intermembrane phospholipid transport system ATP-binding protein MlaF (264 aa).

The ABC transporter domain occupies 6-242 (IEVKNLTFKR…QDLRVVQFLK (237 aa)). 38–45 (GPSGIGKT) lines the ATP pocket.

This sequence belongs to the ABC transporter superfamily. MlaF family. In terms of assembly, the complex is composed of two ATP-binding proteins (MlaF), two transmembrane proteins (MlaE), two cytoplasmic solute-binding proteins (MlaB) and six periplasmic solute-binding proteins (MlaD).

The protein resides in the cell inner membrane. Part of the ABC transporter complex MlaFEDB, which is involved in a phospholipid transport pathway that maintains lipid asymmetry in the outer membrane by retrograde trafficking of phospholipids from the outer membrane to the inner membrane. Responsible for energy coupling to the transport system. This chain is Intermembrane phospholipid transport system ATP-binding protein MlaF, found in Haemophilus influenzae (strain ATCC 51907 / DSM 11121 / KW20 / Rd).